The following is a 160-amino-acid chain: Photosystem I reaction center subunit XI (160 aa).

2 consecutive transmembrane segments (helical) span residues 84–104 (LIPA…YGLV) and 125–145 (FAAG…FLLE).

It belongs to the PsaL family.

The protein resides in the cellular thylakoid membrane. The sequence is that of Photosystem I reaction center subunit XI from Microcystis aeruginosa (strain NIES-843 / IAM M-2473).